Reading from the N-terminus, the 103-residue chain is Small ribosomal subunit protein uS10 (103 aa).

This sequence belongs to the universal ribosomal protein uS10 family. In terms of assembly, part of the 30S ribosomal subunit.

Involved in the binding of tRNA to the ribosomes. The sequence is that of Small ribosomal subunit protein uS10 from Vibrio cholerae serotype O1 (strain ATCC 39541 / Classical Ogawa 395 / O395).